The chain runs to 556 residues: Formate--tetrahydrofolate ligase (556 aa).

An ATP-binding site is contributed by 65-72 (TPAGEGKT).

The protein belongs to the formate--tetrahydrofolate ligase family.

It catalyses the reaction (6S)-5,6,7,8-tetrahydrofolate + formate + ATP = (6R)-10-formyltetrahydrofolate + ADP + phosphate. It participates in one-carbon metabolism; tetrahydrofolate interconversion. In Hyphomonas neptunium (strain ATCC 15444), this protein is Formate--tetrahydrofolate ligase.